The chain runs to 312 residues: Ribose-phosphate pyrophosphokinase (312 aa).

ATP is bound by residues 34–36 and 93–94; these read DGE and RQ. The Mg(2+) site is built by His128 and Asp167. Lys191 is a catalytic residue. D-ribose 5-phosphate contacts are provided by Arg193 and Asp217.

Belongs to the ribose-phosphate pyrophosphokinase family. Class I subfamily. Homohexamer. Mg(2+) is required as a cofactor.

Its subcellular location is the cytoplasm. It catalyses the reaction D-ribose 5-phosphate + ATP = 5-phospho-alpha-D-ribose 1-diphosphate + AMP + H(+). Its pathway is metabolic intermediate biosynthesis; 5-phospho-alpha-D-ribose 1-diphosphate biosynthesis; 5-phospho-alpha-D-ribose 1-diphosphate from D-ribose 5-phosphate (route I): step 1/1. In terms of biological role, involved in the biosynthesis of the central metabolite phospho-alpha-D-ribosyl-1-pyrophosphate (PRPP) via the transfer of pyrophosphoryl group from ATP to 1-hydroxyl of ribose-5-phosphate (Rib-5-P). The sequence is that of Ribose-phosphate pyrophosphokinase from Baumannia cicadellinicola subsp. Homalodisca coagulata.